Here is a 142-residue protein sequence, read N- to C-terminus: MHELSVAQSVLETVLDVARKRGAERVLSVRLRIGEFTLLNPEQLRFCLEVLAEGTPVEGAKFEIEIERGYFKCAECGHRWRPEDESLKDPSLHTAFDLSELTELLDLKCPKCGSRAVKLDGGDACSIESVRLEVPGEQHAQG.

Position 2 (histidine 2) interacts with Ni(2+). Zn(2+) is bound by residues cysteine 73, cysteine 76, cysteine 109, and cysteine 112.

This sequence belongs to the HypA/HybF family.

Involved in the maturation of [NiFe] hydrogenases. Required for nickel insertion into the metal center of the hydrogenase. The sequence is that of Hydrogenase maturation factor HypA from Methanopyrus kandleri (strain AV19 / DSM 6324 / JCM 9639 / NBRC 100938).